Here is a 674-residue protein sequence, read N- to C-terminus: Acyl-coenzyme A oxidase acox-1.1 (674 aa).

FAD-binding positions include 149–152 (YAQT), 157–158 (GT), and Gly-191. Substrate-binding positions include 285 to 288 (KINY) and Arg-295. FAD-binding positions include Arg-320 and 340 to 343 (QQHR). Residues His-342, Ser-392, His-396, and Gln-404 each contribute to the ATP site. An FAD-binding site is contributed by Gly-411. 433-434 (YE) provides a ligand contact to substrate. Residue Glu-434 is the Proton acceptor of the active site. Residue Glu-436 coordinates FAD. Residues 533 to 536 (RASR) and Tyr-581 each bind ATP. Residues 672–674 (SKL) carry the Microbody targeting signal motif.

It belongs to the acyl-CoA oxidase family. As to quaternary structure, homodimer. Forms a heterodimer with acox-1.2. Forms a heterodimer with acox-1.3; the interaction may be important for the stability of acox-1.3. Requires FAD as cofactor. Expressed in hypodermis and intestine.

It localises to the peroxisome. It carries out the reaction nonanoyl-CoA + O2 = (2E)-nonenoyl-CoA + H2O2. The catalysed reaction is dodecanoyl-CoA + O2 = (2E)-dodecenoyl-CoA + H2O2. It catalyses the reaction a 2,3-saturated acyl-CoA + O2 = a (2E)-enoyl-CoA + H2O2. The enzyme catalyses heptanoyl-CoA + O2 = (2E)-heptenoyl-CoA + H2O2. It carries out the reaction (8R)-8-hydroxynonanoyl-CoA + O2 = (2E,8R)-8-hydroxynonenoyl-CoA + H2O2. The catalysed reaction is pentanoyl-CoA + O2 = (2E)-pentenoyl-CoA + H2O2. It catalyses the reaction hexadecanoyl-CoA + O2 = (2E)-hexadecenoyl-CoA + H2O2. The enzyme catalyses IC-asc-C7-CoA + O2 = IC-asc-DeltaC7-CoA + H2O2. It carries out the reaction IC-asc-C9-CoA + O2 = IC-asc-DeltaC9-CoA + H2O2. The catalysed reaction is asc-omegaC5-CoA + O2 = asc-omegaDeltaC5-CoA + H2O2. It catalyses the reaction asc-C7-CoA + O2 = asc-DeltaC7-CoA + H2O2. The enzyme catalyses asc-omegaC7-CoA + O2 = asc-omegaDeltaC7-CoA + H2O2. It carries out the reaction asc-C9-CoA + O2 = asc-DeltaC9-CoA + H2O2. The catalysed reaction is asc-C13-CoA + O2 = asc-DeltaC13-CoA + H2O2. Its pathway is lipid metabolism; peroxisomal fatty acid beta-oxidation. Its activity is regulated as follows. Activated by ATP. ATP binding leads to a conformational change that promotes FAD cofactor binding and enzyme activity. ATP binding likely occurs during acox-1.1 folding and/or dimer formation. Functionally, involved in the first step of peroxisomal beta-oxidation by catalyzing the desaturation of fatty acid-derived side chains. Specifically, catalyzes the desaturation of fatty acids heptanoyl-CoA (C7), nonanoyl-CoA (C9), dodecanoyl-CoA (C12) and to a lesser extent pentanoyl-CoA (C5) and hexadecanoyl-CoA (C16), and hydroxylated fatty acid hydroxynonanoyl-CoA. Also, catalyzes the desaturation fatty acid-derived side chains of ascaroside pheromones, which regulates development and behavior. Specifically, shortens ascaroside with 5-carbon omega side chain (asc-omega-C5), 7-carbon side chain (asc-C7), 9-carbon side chain (asc-C9), 11-carbon side chain (asc-C11), 13-carbon side chain (asc-C13), 15-carbon side chain (asc-C15) and to a lesser extent ascarosides with 7-omega-carbon side chain (asc-omega-C7). Also shortens indol-3-carbonyl(IC)-ascarosides with 7-carbon side chain (IC-asc-C7) and to a lesser extent (IC)-ascarosides with 9-carbon side chain (IC-asc-C9). May associate and regulate the folding and/or the catalytic activity of other acyl-coenzyme A oxidases including acox-1.2, acox-1.3, acox-1.4 and acox-3 modulating the type of ascarosides produced. In association with acox-1.3, catalyzes the desaturation of asc-C7-CoA but not of fatty acids or hydroxylated fatty acids. Involved in the biosynthesis of asc-C6-MK (daumone 2) and asc-delta-C9 (daumone 3) but not asc-C7 (daumone 1); daumones are pheromones produced during unfavourable growth conditions which promote entry into the dauer stage. This chain is Acyl-coenzyme A oxidase acox-1.1, found in Caenorhabditis elegans.